The chain runs to 558 residues: Oligo-1,6-glucosidase (558 aa).

Residues Asp21, Asn23, Asp25, and Asp29 each coordinate Ca(2+). Asp199 serves as the catalytic Nucleophile. Glu255 acts as the Proton donor in catalysis.

It belongs to the glycosyl hydrolase 13 family.

The protein resides in the cytoplasm. The enzyme catalyses Hydrolysis of (1-&gt;6)-alpha-D-glucosidic linkages in some oligosaccharides produced from starch and glycogen by alpha-amylase, and in isomaltose.. This is Oligo-1,6-glucosidase (malL) from Bacillus cereus.